A 486-amino-acid chain; its full sequence is Flavin-dependent monooxygenase pboD (486 aa).

FAD-binding residues include aspartate 51, glycine 65, and arginine 124. The active site involves arginine 203. Positions 344 and 357 each coordinate FAD.

Belongs to the paxM FAD-dependent monooxygenase family. FAD serves as cofactor.

It functions in the pathway secondary metabolite biosynthesis. Functionally, flavin-dependent monooxygenase; part of the gene cluster that mediates the biosynthesis of protubonine B, a hydroxylated and diacetylated cyclo-L-Trp-L-Leu derivative. Within the pathway, pboD catalyzes the hydroxylation at C-3 of the indole ring of cyclo-L-Trp-L-Leu and subsequent formation of the pyrrolidine ring, eading to the production of protubonine D. PboD is also able to accept other cyclodipeptides (CDPs) as substrates, including cyclo-L-Trp-L-Trp, cyclo-L-Trp-L-Tyr, cyclo-L-Trp-L-Phe, cyclo-L-Trp-L-Met, cyclo-L-Trp-L-Ala, cyclo-L-Trp-L-Pro and cyclo-L-Trp-Gly. Assays with cyclo-L-Trp-L-Trp, cyclo-L-Trp-L-Tyr, cyclo-L-Trp-L-Phe show similar or even slightly higher conversion yields, compared with that of the natural substrate cyclo-L-Trp-L-Leu, whereas cyclo-L-Trp-L-Pro and cyclo-L-Trp-Gly are accepted by PboD but only with conversion yields of 10 and 4%, respectively. Cyclo-L-Trp-L-His is not accepted as a substrate. The first step of the protubonine B synthesis is performed by the nonribosomal peptide synthetase pboA that catalyzes the formation of cyclo-L-Trp-L-Leu by condensing L-Leu with L-Trp. The flavin-dependent monooxygenase pboD is responsible for hydroxylation at C-3 of the indole ring and subsequent formation of the pyrrolidine ring, leadind to protubonine D. Protubonine D is further diacetylated by two acetyltransferases, pboB and pboC, to form the final product protubonine B via protubonine C. This chain is Flavin-dependent monooxygenase pboD, found in Aspergillus ustus.